Reading from the N-terminus, the 378-residue chain is uncharacterized protein (378 aa).

The segment covering 1–11 has biased composition (polar residues); it reads MSQQTTPAEQK. The segment at 1–33 is disordered; the sequence is MSQQTTPAEQKSLQRKKPPFRADQVGSLLRSEP.

To B.subtilis YxjH.

This is an uncharacterized protein from Bacillus subtilis (strain 168).